A 74-amino-acid chain; its full sequence is uncharacterized protein (74 aa).

This is an uncharacterized protein from Schizosaccharomyces pombe (strain 972 / ATCC 24843) (Fission yeast).